Reading from the N-terminus, the 75-residue chain is RNA-binding protein KhpA (75 aa).

The 47-residue stretch at 29–75 folds into the KH domain; the sequence is KVVYHLTVHPDDVGKVIGKNGRIAKAIRTVVYASKTDGNKRIYLDIM.

The protein belongs to the KhpA RNA-binding protein family. Forms a complex with KhpB.

It localises to the cytoplasm. Its function is as follows. A probable RNA chaperone. Forms a complex with KhpB which binds to cellular RNA and controls its expression. Plays a role in peptidoglycan (PG) homeostasis and cell length regulation. The polypeptide is RNA-binding protein KhpA (Oceanobacillus iheyensis (strain DSM 14371 / CIP 107618 / JCM 11309 / KCTC 3954 / HTE831)).